A 506-amino-acid polypeptide reads, in one-letter code: Ent-kaurenoic acid oxidase (506 aa).

Residues A11–V31 form a helical membrane-spanning segment. C451 serves as a coordination point for heme.

Belongs to the cytochrome P450 family. Heme serves as cofactor. In terms of tissue distribution, expressed in roots and panicles. Expressed at low levels in vegetative shoot apices, leaf sheaths, leaf blades and stems.

The protein localises to the endoplasmic reticulum membrane. It catalyses the reaction ent-kaur-16-en-19-oate + 3 reduced [NADPH--hemoprotein reductase] + 3 O2 = gibberellin A12 + 3 oxidized [NADPH--hemoprotein reductase] + 4 H2O + 4 H(+). The enzyme catalyses ent-kaur-16-en-19-oate + reduced [NADPH--hemoprotein reductase] + O2 = ent-7alpha-hydroxykaur-16-en-19-oate + oxidized [NADPH--hemoprotein reductase] + H2O + H(+). It carries out the reaction ent-7alpha-hydroxykaur-16-en-19-oate + reduced [NADPH--hemoprotein reductase] + O2 = gibberellin A12 aldehyde + oxidized [NADPH--hemoprotein reductase] + 2 H2O + H(+). The catalysed reaction is gibberellin A12 aldehyde + reduced [NADPH--hemoprotein reductase] + O2 = gibberellin A12 + oxidized [NADPH--hemoprotein reductase] + H2O + 2 H(+). It functions in the pathway plant hormone biosynthesis; gibberellin biosynthesis. Involved in gibberellin (GA) biosynthesis. Catalyzes three successive oxidations of ent-kaurenoic acid giving gibberellin 12 (GA12), a key step in GAs biosynthesis. GAs, which are involved many processes, including stem elongation, play a central role in plant development. Required for pollen germination and elongation. In Oryza sativa subsp. japonica (Rice), this protein is Ent-kaurenoic acid oxidase.